A 173-amino-acid chain; its full sequence is Shikimate kinase (173 aa).

11-16 (GTGKTS) lines the ATP pocket. Thr15 contributes to the Mg(2+) binding site. Substrate contacts are provided by Asp33, Arg57, and Gly79. Arg117 serves as a coordination point for ATP. Arg136 serves as a coordination point for substrate.

This sequence belongs to the shikimate kinase family. Monomer. It depends on Mg(2+) as a cofactor.

It localises to the cytoplasm. It carries out the reaction shikimate + ATP = 3-phosphoshikimate + ADP + H(+). The protein operates within metabolic intermediate biosynthesis; chorismate biosynthesis; chorismate from D-erythrose 4-phosphate and phosphoenolpyruvate: step 5/7. In terms of biological role, catalyzes the specific phosphorylation of the 3-hydroxyl group of shikimic acid using ATP as a cosubstrate. The protein is Shikimate kinase of Thermodesulfovibrio yellowstonii (strain ATCC 51303 / DSM 11347 / YP87).